The chain runs to 198 residues: Probable GTP-binding protein EngB (198 aa).

The 174-residue stretch at 22 to 195 (NIPEVALAGR…LEVIGRWVGL (174 aa)) folds into the EngB-type G domain. GTP is bound by residues 30-37 (GRSNVGKS), 57-61 (GRTRL), 75-78 (DLPG), 142-145 (TKAD), and 174-176 (FSA). Serine 37 and threonine 59 together coordinate Mg(2+).

It belongs to the TRAFAC class TrmE-Era-EngA-EngB-Septin-like GTPase superfamily. EngB GTPase family. The cofactor is Mg(2+).

Its function is as follows. Necessary for normal cell division and for the maintenance of normal septation. The polypeptide is Probable GTP-binding protein EngB (Pelotomaculum thermopropionicum (strain DSM 13744 / JCM 10971 / SI)).